The chain runs to 374 residues: Hydroxylysine kinase (374 aa).

Aspartate 228 (proton acceptor) is an active-site residue.

It belongs to the aminoglycoside phosphotransferase family.

It localises to the cytoplasm. The catalysed reaction is (5R)-5-hydroxy-L-lysine + GTP = (5R)-5-phosphooxy-L-lysine + GDP + H(+). Catalyzes the GTP-dependent phosphorylation of 5-hydroxy-L-lysine. This Xenopus laevis (African clawed frog) protein is Hydroxylysine kinase (hykk).